Reading from the N-terminus, the 1823-residue chain is Vitellogenin (1823 aa).

A signal peptide spans 1-14 (MWKLLLVALAFALA). Gln-17 is subject to Pyrrolidone carboxylic acid. Residues 18–658 (FQPGKVYRYS…SPSGPLPRAV (641 aa)) enclose the Vitellogenin domain. Residues 953–986 (KGLISQQQQQPHHQQQPHQHGQDQARAAYQRPWA) form a disordered region. Low complexity predominate over residues 958-976 (QQQQQPHHQQQPHQHGQDQ). Asn-1097 is a glycosylation site (N-linked (GlcNAc...) asparagine). The tract at residues 1119–1289 (SDKDKDAKKP…SSSSSESKSL (171 aa)) is disordered. Composition is skewed to low complexity over residues 1128–1149 (PPGS…SSSD) and 1178–1192 (SSSS…SDSS). A compositionally biased stretch (basic residues) spans 1194 to 1206 (SPHKHGGAKRQHA). 2 stretches are compositionally biased toward low complexity: residues 1217–1238 (SHSS…KSFS) and 1253–1286 (SSSS…SSES). A glycan (N-linked (GlcNAc...) asparagine) is linked at Asn-1298. The tract at residues 1308-1351 (VPQRKPQTSRRHTPASSSSSSSSSSSSSSSSSSSDSDMTVSAES) is disordered. Over residues 1323-1344 (SSSSSSSSSSSSSSSSSSSDSD) the composition is skewed to low complexity. A VWFD domain is found at 1564–1732 (SACELNEQSL…SWIAPDETCG (169 aa)). 2 cysteine pairs are disulfide-bonded: Cys-1566–Cys-1695 and Cys-1589–Cys-1731. A glycan (N-linked (GlcNAc...) asparagine) is linked at Asn-1675.

Post-translationally, what corresponds to phosvitin in other species is lost during maturation of vitellogenin to lipovitellin. As to expression, produced by the liver, secreted into the blood and then sequestered by receptor mediated endocytosis into growing oocytes, where it is generally cleaved, giving rise to the respective yolk components lipovitellins 1 and 2.

Functionally, precursor of the major egg-yolk proteins that are sources of nutrients during early development of oviparous organisms. The chain is Vitellogenin from Ichthyomyzon unicuspis (Silver lamprey).